The chain runs to 209 residues: Prolactin (209 aa).

An N-terminal signal peptide occupies residues 1–24 (MAQRFKGRSLFLTALLCLASQGYA). 2 disulfides stabilise this stretch: cysteine 70–cysteine 184 and cysteine 201–cysteine 209.

It belongs to the somatotropin/prolactin family.

The protein localises to the secreted. This is Prolactin (prl) from Anguilla anguilla (European freshwater eel).